The following is a 460-amino-acid chain: ATP synthase subunit beta (460 aa).

149–156 serves as a coordination point for ATP; that stretch reads GGAGVGKT.

This sequence belongs to the ATPase alpha/beta chains family. As to quaternary structure, F-type ATPases have 2 components, CF(1) - the catalytic core - and CF(0) - the membrane proton channel. CF(1) has five subunits: alpha(3), beta(3), gamma(1), delta(1), epsilon(1). CF(0) has three main subunits: a(1), b(2) and c(9-12). The alpha and beta chains form an alternating ring which encloses part of the gamma chain. CF(1) is attached to CF(0) by a central stalk formed by the gamma and epsilon chains, while a peripheral stalk is formed by the delta and b chains.

It is found in the cell inner membrane. The enzyme catalyses ATP + H2O + 4 H(+)(in) = ADP + phosphate + 5 H(+)(out). Produces ATP from ADP in the presence of a proton gradient across the membrane. The catalytic sites are hosted primarily by the beta subunits. The protein is ATP synthase subunit beta of Nitrosomonas europaea (strain ATCC 19718 / CIP 103999 / KCTC 2705 / NBRC 14298).